Reading from the N-terminus, the 97-residue chain is Aspartyl/glutamyl-tRNA(Asn/Gln) amidotransferase subunit C (97 aa).

It belongs to the GatC family. As to quaternary structure, heterotrimer of A, B and C subunits.

The catalysed reaction is L-glutamyl-tRNA(Gln) + L-glutamine + ATP + H2O = L-glutaminyl-tRNA(Gln) + L-glutamate + ADP + phosphate + H(+). The enzyme catalyses L-aspartyl-tRNA(Asn) + L-glutamine + ATP + H2O = L-asparaginyl-tRNA(Asn) + L-glutamate + ADP + phosphate + 2 H(+). In terms of biological role, allows the formation of correctly charged Asn-tRNA(Asn) or Gln-tRNA(Gln) through the transamidation of misacylated Asp-tRNA(Asn) or Glu-tRNA(Gln) in organisms which lack either or both of asparaginyl-tRNA or glutaminyl-tRNA synthetases. The reaction takes place in the presence of glutamine and ATP through an activated phospho-Asp-tRNA(Asn) or phospho-Glu-tRNA(Gln). The sequence is that of Aspartyl/glutamyl-tRNA(Asn/Gln) amidotransferase subunit C from Listeria monocytogenes serotype 4b (strain CLIP80459).